A 68-amino-acid chain; its full sequence is Disintegrin EMF10B (68 aa).

The 68-residue stretch at 1-68 (ELLQNSGNPC…SDCPRNPVFK (68 aa)) folds into the Disintegrin domain. Intrachain disulfides connect C10–C33, C24–C30, C29–C54, and C42–C61. A Cell attachment site; atypical (MGD) motif is present at residues 46–48 (MGD).

It belongs to the venom metalloproteinase (M12B) family. P-II subfamily. P-IIe sub-subfamily. Heterodimer with EMF10A; disulfide-linked. In terms of tissue distribution, expressed by the venom gland.

Its subcellular location is the secreted. Its function is as follows. Extremely potent and selective inhibitor of integrin alpha-5/beta-1 (ITGA5/ITGB1). Partially inhibits adhesion of cells expressing alpha-IIb/beta-3 (ITGA2B/ITGB3), alpha-V/beta-3 (ITGAV/ITGB3), and alpha-4/beta-1 (ITGA4/ITGB1) to appropriate ligands only at concentration higher than 500 nM. Weakly inhibits ADP-induced platelet aggregation. The polypeptide is Disintegrin EMF10B (Eristicophis macmahoni (Leaf-nosed viper)).